The following is a 475-amino-acid chain: Putative poly(A) polymerase catalytic subunit (475 aa).

It belongs to the poxviridae poly(A) polymerase catalytic subunit family. Highly divergent.

Its subcellular location is the virion. It carries out the reaction RNA(n) + ATP = RNA(n)-3'-adenine ribonucleotide + diphosphate. Functionally, polymerase that creates the 3'-poly(A) tail of mRNA's. The protein is Putative poly(A) polymerase catalytic subunit of Ornithodoros (relapsing fever ticks).